Reading from the N-terminus, the 2079-residue chain is MYSGLWTKNGEQILPSFISINAKVVDLAAQIVFTKTYSDINKYFATMNKMNSSNEEDATFKAFLNTSMGVLCGFEINLDGKKITSQVVSQADAMRLFEKNQISTADDIVKEAEFNNSDPHIEEDFFLCKVNNLSQYKELEIIITYSTEMSTQGDYLFMEFPTSLTTIRSSQFFETLDNENSTTNTNTQTQPQSVNTTTTTTPSTTTATNITNINNNIQNIGSSTTGGLTHSTSSNKLSLSSSSIQVNQKQGLLIEMNLDMPSKISEIISPSHSGLIDVEYKGETGKVTYKDSRSIDVVNQSDLVVLIKLDNPHEPYGFIEENENGSRALMIAFYPQLSSAAIAASATTPVVESELIFLVDVSESMEGYNMKHAKKALHRFLHSLSKDTYFNIISFASSHRKLFAQSVKYNDENLKAATAYVESLKAISHGETNLLEPLKDIYSVDATCPRKIFLLTDGRVNNIGPIVDLVRQNAHNTSVFPIGMGEFVSRQLVEYIANAGSGVAELVIENETIESKVMRQLKRALQPAMSNIKVDWGSLSSKSQAPRDLRTLFFGDRLTIYNILGKDEKIDGTTVKLIANGPTGPVSFPVTIKSEETKKGNLVHSLAAYTLIQDLQDQIYENNLVDPKDIDPIRQKIIDLGIKYGLASNYTSFCSVEQPDQFNELLNNNKQSEQAQETTTTTTTATTVDDNVVIEENKQPEPIVEEQPPVLNGNINLQNLTINHDGKSNDNGLFKSNDRLKTHHQGESAMISLRGSASGIPTTLSGSGIPFYNPSSPNHDRNINTTQQPTPTQSTPLKTPLKTPLTPLSKSGLKVSSPEFVPKNTLSAKAAPFVPSPNKLPTTTTSAPATTPITTPAPTTTTTEVKPTVAEPVKPVVAEPTKPVVAEPTIPAVAEPIKPVVTEPTKPVVEEPAKPAVKPTLFEMIKIAEAKAAAEQKAAAEQKAIADAKAAAEQAAKPVEPAVVQQQQPQQTKPKADKQSKQNAKDNKQSNKPVVVEQKPPVVTETKPTVATESATPTKPTFAQAAAAAAAAAQQAAQQAAATTPVKQQPTKQTTPNKSTPAVETKSVVAETKPAVEQPKPVETKPVVEQPKPVETKPVEQTKPVETKPVEVKPTVEQPKPVEVKPTVEQPKPIETKPTVNSIASTLANFGFQTNEPAKQATPTPAPTPVQSNESNNNNNNNNNNNNNNNNNNNNNNNIVSSTPIKKPAVTNILPTQAVILSSGGRRVYNNDFLLSFKDSNTKAPDSLKTTPIFSNGPQGISPSSGNGSNKSHFGKKRGDRGGRGGRDRNADAEPSTPIIVKKVFSQDVQGTHQELLKKFKFNLNRITMDTYSSLIKNIDELKVPDEEALKSISKILFEKAIIDQKYSAVYAILAGHLDTTFPKFAELSLKRAILDNCQTEFSAVVDKSKFEGLSKEDLEEQEFIIKRRVLGNIKFIGELYKHGVLGEKVAKAIVVQLITKCEERLDEESIEPLVKILNTIGKKLDEVDKANTDLYFSKVTNISNNPVVTSRGRFILLDLIDLRANKWQPKNSTQTKTKKDESDKEERFIAKHGGPQKRENDSRRDGGRDSRGDDRRGGGGRDSRGDDRRGGRDSRDAPRSAFGGKSSKDGWETVGAKGGNNRDKGGRGGDRSGGKQSPSGKKDSGFGPSSGGSSLFGSRRGDDRRDGGGNSSPYRPGQGFGRKDDQSSSIPSIPNRSNAFSALEDDDYQPSTSPQPPSVFGNRSNDRDSRGPSKPDNRKQPAQPPAPVEPVKPKINFEKIEDDISMTLDEYAETQDIDEAIECIKEINEPTVLGKQFNIFIMKSLERKEKEKQLIIELFSGILTAQLFNAEQIKEGLKEIIDTIEDIEIDLPFSGVFVATIVGICIESEIFPLNYLEEAYAHLVDSDKAEEMIVNTFNSIVKVSDKDRLVEIYENTKGLDILKLFALKNRKVAYLEEFYQTHFPYLSHEKAVEGSNESALNEQPDLIEHLLLLQSADGYWQLDKKLAGILGISLNILEEVDSSDSCVITTHPEVWATCLAITFVNLNNVSDPDDEDDLELVLSKSHKWLASQYQSDKPPKQSQDDVLLKAKRLLSEVL.

Positions 11-147 constitute a VIT domain; the sequence is EQILPSFISI…ELEIIITYST (137 aa). The segment at 178–203 is disordered; it reads NENSTTNTNTQTQPQSVNTTTTTTPS. Residues 180-203 are compositionally biased toward low complexity; the sequence is NSTTNTNTQTQPQSVNTTTTTTPS. In terms of domain architecture, VWFA spans 354 to 525; that stretch reads ELIFLVDVSE…KVMRQLKRAL (172 aa). Disordered regions lie at residues 761-800, 832-866, 956-1139, 1155-1203, and 1239-1294; these read PTTLSGSGIPFYNPSSPNHDRNINTTQQPTPTQSTPLKTP, PFVPSPNKLPTTTTSAPATTPITTPAPTTTTTEVK, AKPV…TKPT, NEPA…VSST, and DSNT…ADAE. 3 stretches are compositionally biased toward low complexity: residues 785–800, 841–866, and 956–973; these read TTQQPTPTQSTPLKTP, PTTTTSAPATTPITTPAPTTTTTEVK, and AKPVEPAVVQQQQPQQTK. A coiled-coil region spans residues 923–957; that stretch reads EMIKIAEAKAAAEQKAAAEQKAIADAKAAAEQAAK. Residues 974–989 show a composition bias toward basic and acidic residues; the sequence is PKADKQSKQNAKDNKQ. Positions 992-1006 are enriched in low complexity; that stretch reads KPVVVEQKPPVVTET. A compositionally biased stretch (polar residues) spans 1007-1021; the sequence is KPTVATESATPTKPT. The segment covering 1023 to 1061 has biased composition (low complexity); the sequence is AQAAAAAAAAAQQAAQQAAATTPVKQQPTKQTTPNKSTP. Basic and acidic residues predominate over residues 1092-1111; that stretch reads KPVETKPVEQTKPVETKPVE. Positions 1176–1198 are enriched in low complexity; it reads NNNNNNNNNNNNNNNNNNNNNNN. The segment covering 1239–1272 has biased composition (polar residues); sequence DSNTKAPDSLKTTPIFSNGPQGISPSSGNGSNKS. Basic and acidic residues predominate over residues 1280-1292; it reads DRGGRGGRDRNAD. The MIF4G domain maps to 1317–1527; it reads LKKFKFNLNR…LDLIDLRANK (211 aa). The segment at 1530 to 1755 is disordered; sequence PKNSTQTKTK…PAPVEPVKPK (226 aa). Basic and acidic residues-rich tracts occupy residues 1538-1550, 1557-1599, and 1621-1634; these read TKKDESDKEERFI, QKRE…RDAP, and NNRDKGGRGGDRSG. Low complexity-rich tracts occupy residues 1635-1659 and 1688-1699; these read GKQSPSGKKDSGFGPSSGGSSLFGS and SSSIPSIPNRSN. Positions 1725-1740 are enriched in basic and acidic residues; the sequence is SNDRDSRGPSKPDNRK. One can recognise an MI domain in the interval 1760–1882; that stretch reads KIEDDISMTL…PLNYLEEAYA (123 aa).

This chain is von Willebrand factor A domain-containing protein DDB_G0286969, found in Dictyostelium discoideum (Social amoeba).